The following is a 393-amino-acid chain: NAD(P)H-quinone oxidoreductase subunit H, chloroplastic (393 aa).

Belongs to the complex I 49 kDa subunit family. As to quaternary structure, NDH is composed of at least 16 different subunits, 5 of which are encoded in the nucleus.

The protein localises to the plastid. The protein resides in the chloroplast thylakoid membrane. It catalyses the reaction a plastoquinone + NADH + (n+1) H(+)(in) = a plastoquinol + NAD(+) + n H(+)(out). It carries out the reaction a plastoquinone + NADPH + (n+1) H(+)(in) = a plastoquinol + NADP(+) + n H(+)(out). Its function is as follows. NDH shuttles electrons from NAD(P)H:plastoquinone, via FMN and iron-sulfur (Fe-S) centers, to quinones in the photosynthetic chain and possibly in a chloroplast respiratory chain. The immediate electron acceptor for the enzyme in this species is believed to be plastoquinone. Couples the redox reaction to proton translocation, and thus conserves the redox energy in a proton gradient. The chain is NAD(P)H-quinone oxidoreductase subunit H, chloroplastic from Acorus calamus var. americanus (American sweet flag).